Here is a 260-residue protein sequence, read N- to C-terminus: MERLENCAQMFQRRFLNESFRRHCPVLLACIVLGGSLLKELCPLPDSYWNNKRNVLNVYFVKFSWGWTLWLLLPFIALTNYKLTRSTTKVLRRLSSLLVSTLIWYLCTNLFLYIENITGSCYESEAMSDPKEHQDRRECRLHSGYWHGFDISGHCFLLSYCILLILEETSIISNIRFERHWHRMAINAQFAALSILVIIWVWMFLCTAVYFHNIFQKVIGTAFGILAWYITYRWWYLQPISPGLPPASASRSGKEPIYRN.

Over 1–23 (MERLENCAQMFQRRFLNESFRRH) the chain is Cytoplasmic. A helical transmembrane segment spans residues 24–44 (CPVLLACIVLGGSLLKELCPL). At 45-57 (PDSYWNNKRNVLN) the chain is on the lumenal side. Residues 58–78 (VYFVKFSWGWTLWLLLPFIAL) form a helical membrane-spanning segment. The Cytoplasmic portion of the chain corresponds to 79 to 93 (TNYKLTRSTTKVLRR). The helical transmembrane segment at 94 to 114 (LSSLLVSTLIWYLCTNLFLYI) threads the bilayer. At 115–145 (ENITGSCYESEAMSDPKEHQDRRECRLHSGY) the chain is on the lumenal side. Residues 146-166 (WHGFDISGHCFLLSYCILLIL) form a helical membrane-spanning segment. His154 is an active-site residue. Residues 167 to 189 (EETSIISNIRFERHWHRMAINAQ) lie on the Cytoplasmic side of the membrane. Helical transmembrane passes span 190–210 (FAAL…TAVY) and 211–231 (FHNI…WYIT). His212 is a catalytic residue. The Cytoplasmic portion of the chain corresponds to 232–260 (YRWWYLQPISPGLPPASASRSGKEPIYRN).

Belongs to the FIT family. FIT2 subfamily.

It is found in the endoplasmic reticulum membrane. It carries out the reaction an acyl-CoA + H2O = an acyl-4'-phosphopantetheine + adenosine 3',5'-bisphosphate + 2 H(+). In terms of biological role, fatty acyl-coenzyme A (CoA) diphosphatase that hydrolyzes fatty acyl-CoA to yield acyl-4'-phosphopantetheine and adenosine 3',5'-bisphosphate. Preferentially hydrolyzes unsaturated long-chain acyl-CoA substrates in the endoplasmic reticulum (ER) lumen. This catalytic activity is required for maintaining ER structure and for lipid droplets (LDs) biogenesis, which are lipid storage organelles involved in maintaining lipid and energy homeostasis. May directly bind to diacylglycerol (DAGs) and triacylglycerol, which is also important for LD biogenesis. May support directional budding of nacent LDs from the ER into the cytosol by reducing DAG levels at sites of LD formation. May play a role in the regulation of cell morphology, ER morphology and cytoskeletal organization. In Xenopus tropicalis (Western clawed frog), this protein is Acyl-coenzyme A diphosphatase FITM2.